The chain runs to 195 residues: Peptidyl-tRNA hydrolase (195 aa).

Position 14 (Tyr-14) interacts with tRNA. The Proton acceptor role is filled by His-19. TRNA contacts are provided by Tyr-64 and Asn-66.

The protein belongs to the PTH family. As to quaternary structure, monomer.

Its subcellular location is the cytoplasm. The enzyme catalyses an N-acyl-L-alpha-aminoacyl-tRNA + H2O = an N-acyl-L-amino acid + a tRNA + H(+). In terms of biological role, hydrolyzes ribosome-free peptidyl-tRNAs (with 1 or more amino acids incorporated), which drop off the ribosome during protein synthesis, or as a result of ribosome stalling. Catalyzes the release of premature peptidyl moieties from peptidyl-tRNA molecules trapped in stalled 50S ribosomal subunits, and thus maintains levels of free tRNAs and 50S ribosomes. The polypeptide is Peptidyl-tRNA hydrolase (Desulforudis audaxviator (strain MP104C)).